The sequence spans 213 residues: Orotate phosphoribosyltransferase (213 aa).

Residue Lys-26 participates in 5-phospho-alpha-D-ribose 1-diphosphate binding. Phe-34–Phe-35 provides a ligand contact to orotate. Residues Tyr-72–Lys-73, Arg-99, Lys-100, Lys-103, His-105, and Asp-124–Ala-132 each bind 5-phospho-alpha-D-ribose 1-diphosphate. Orotate is bound by residues Thr-128 and Arg-156.

Belongs to the purine/pyrimidine phosphoribosyltransferase family. PyrE subfamily. As to quaternary structure, homodimer. Mg(2+) is required as a cofactor.

It catalyses the reaction orotidine 5'-phosphate + diphosphate = orotate + 5-phospho-alpha-D-ribose 1-diphosphate. The protein operates within pyrimidine metabolism; UMP biosynthesis via de novo pathway; UMP from orotate: step 1/2. Its function is as follows. Catalyzes the transfer of a ribosyl phosphate group from 5-phosphoribose 1-diphosphate to orotate, leading to the formation of orotidine monophosphate (OMP). The sequence is that of Orotate phosphoribosyltransferase from Klebsiella pneumoniae (strain 342).